A 659-amino-acid polypeptide reads, in one-letter code: RNA-binding protein MIP6 (659 aa).

Residues 1-27 show a composition bias toward polar residues; that stretch reads MPNSHGNVLNNISLNSKQNPRSISKSC. Residues 1-35 are disordered; it reads MPNSHGNVLNNISLNSKQNPRSISKSCPNDKDARQ. 3 RRM domains span residues 111 to 189, 199 to 267, and 313 to 389; these read NSLF…PSMK, TNVF…GNKI, and KTIL…PGKD.

In terms of assembly, interacts with MEX67.

It is found in the cytoplasm. The chain is RNA-binding protein MIP6 (MIP6) from Saccharomyces cerevisiae (strain ATCC 204508 / S288c) (Baker's yeast).